The primary structure comprises 667 residues: Zeaxanthin epoxidase, chloroplastic (667 aa).

The transit peptide at 1-59 (MGSTPFCYSINPSPSKLDFTRTHVFSPVSKQFYLDLSSFSGKPGGVSGFRSRRALLGVK) directs the protein to the chloroplast. FAD contacts are provided by residues 82 to 110 (RVLV…LVFE) and 360 to 373 (GFTW…LLGD). The region spanning 558–612 (CIVGSEPDQDFPGMRIVIPSSQVSKMHARVIYKDGAFFLMDLRSEHGTYVTDNEG) is the FHA domain.

FAD is required as a cofactor. Expressed in leaves, stems and flowers, and at lower levels in roots and siliques.

It is found in the plastid. The protein localises to the chloroplast. The catalysed reaction is all-trans-zeaxanthin + 4 reduced [2Fe-2S]-[ferredoxin] + 2 O2 + 4 H(+) = all-trans-violaxanthin + 4 oxidized [2Fe-2S]-[ferredoxin] + 2 H2O. The protein operates within plant hormone biosynthesis; abscisate biosynthesis. In terms of biological role, zeaxanthin epoxidase that plays an important role in the xanthophyll cycle and abscisic acid (ABA) biosynthesis. Converts zeaxanthin into antheraxanthin and subsequently violaxanthin. Required for resistance to osmotic and drought stresses, ABA-dependent stomatal closure, seed development and dormancy, modulation of defense gene expression and disease resistance and non-photochemical quencing (NPQ). Through its role in ABA biosynthesis, regulates the expression of stress-responsive genes such as RD29A during osmotic stress and is required for normal plant growth during vegetative development. Is required for late skotomorphogenic growth through its role in the xanthophyll carotenoids neoxanthin, violaxanthin and antheraxanthin biosynthesis. Required for beta-aminobutyric acid (BABA)-induced priming in disease resistance, tolerance to salt and drought stresses and sterility. Participates in NPQ by regulating the level of zeaxanthin in photosynthetic energy conversion. NPQ is a process that maintains the balance between dissipation and utilization of light energy to minimize the generation of oxidizing molecules and the molecular damages they can generate. The sequence is that of Zeaxanthin epoxidase, chloroplastic (ZEP) from Arabidopsis thaliana (Mouse-ear cress).